The following is a 124-amino-acid chain: Mediator of RNA polymerase II transcription subunit 31 (124 aa).

It belongs to the Mediator complex subunit 31 family. As to quaternary structure, component of the Mediator complex.

The protein resides in the nucleus. Component of the Mediator complex, a coactivator involved in the regulated transcription of nearly all RNA polymerase II-dependent genes. Mediator functions as a bridge to convey information from gene-specific regulatory proteins to the basal RNA polymerase II transcription machinery. Mediator is recruited to promoters by direct interactions with regulatory proteins and serves as a scaffold for the assembly of a functional preinitiation complex with RNA polymerase II and the general transcription factors. The chain is Mediator of RNA polymerase II transcription subunit 31 (SOH1) from Kluyveromyces lactis (strain ATCC 8585 / CBS 2359 / DSM 70799 / NBRC 1267 / NRRL Y-1140 / WM37) (Yeast).